A 426-amino-acid chain; its full sequence is Histidine--tRNA ligase (426 aa).

It belongs to the class-II aminoacyl-tRNA synthetase family.

It localises to the cytoplasm. It catalyses the reaction tRNA(His) + L-histidine + ATP = L-histidyl-tRNA(His) + AMP + diphosphate + H(+). The protein is Histidine--tRNA ligase of Sulfurisphaera tokodaii (strain DSM 16993 / JCM 10545 / NBRC 100140 / 7) (Sulfolobus tokodaii).